Consider the following 179-residue polypeptide: NADH-quinone oxidoreductase subunit B (179 aa).

Residues Cys52, Cys53, Cys117, and Cys147 each coordinate [4Fe-4S] cluster.

The protein belongs to the complex I 20 kDa subunit family. In terms of assembly, NDH-1 is composed of 14 different subunits. Subunits NuoB, C, D, E, F, and G constitute the peripheral sector of the complex. It depends on [4Fe-4S] cluster as a cofactor.

The protein resides in the cell inner membrane. It carries out the reaction a quinone + NADH + 5 H(+)(in) = a quinol + NAD(+) + 4 H(+)(out). Functionally, NDH-1 shuttles electrons from NADH, via FMN and iron-sulfur (Fe-S) centers, to quinones in the respiratory chain. The immediate electron acceptor for the enzyme in this species is believed to be ubiquinone. Couples the redox reaction to proton translocation (for every two electrons transferred, four hydrogen ions are translocated across the cytoplasmic membrane), and thus conserves the redox energy in a proton gradient. The protein is NADH-quinone oxidoreductase subunit B of Ehrlichia chaffeensis (strain ATCC CRL-10679 / Arkansas).